A 414-amino-acid polypeptide reads, in one-letter code: Voltage-gated ClC-type chloride channel ClcB (414 aa).

11 consecutive transmembrane segments (helical) span residues Leu5 to Ala25, Ala54 to Tyr74, Ser116 to Ala136, Leu147 to Gly167, Leu169 to Ile189, Val220 to Leu240, Leu255 to Phe275, Thr292 to Ala312, Leu327 to Leu347, Leu353 to Met373, and Met381 to Ile401.

This sequence belongs to the chloride channel (TC 2.A.49) family. ClcB subfamily.

The protein localises to the cell inner membrane. In terms of biological role, probably acts as an electrical shunt for an outwardly-directed proton pump that is linked to amino acid decarboxylation, as part of the extreme acid resistance (XAR) response. The chain is Voltage-gated ClC-type chloride channel ClcB from Yersinia pestis.